The primary structure comprises 253 residues: MEVYLDATECYLKNSLCFYPSLNIFVSWSVLVGAHVGYIVLVIILRKWMQRRAALNMNKIMMIYNVTQIYISAIMAISLAPHLKKGLFNLNGRFSANIEFWIFVHYCSKFLDMFDTVLMIFRKKNEQLSFLHIYHHATIGFIWGLLLRNGIGNGTAFFGAWVNSAVHFLMYSHYLWTSLGFRNPLKSILTKIQMFQFFLCIVQASLAPFFDNQFALQWSFLQLTYHITLFILFLDFHRKSGKKKGLRNLKQTE.

Transmembrane regions (helical) follow at residues isoleucine 24–isoleucine 44, isoleucine 60–alanine 80, phenylalanine 100–isoleucine 120, glutamine 127–leucine 147, glycine 150–methionine 170, isoleucine 188–proline 208, and phenylalanine 214–leucine 234. The HxxHH motif signature appears at histidine 132–histidine 136. Histidine 135 acts as the Nucleophile in catalysis.

The protein belongs to the ELO family.

It localises to the membrane. It carries out the reaction an acyl-CoA + malonyl-CoA + H(+) = a 3-oxoacyl-CoA + CO2 + CoA. It participates in lipid metabolism; polyunsaturated fatty acid biosynthesis. Its function is as follows. Involved in the synthesis of fatty acids. Elongates C20 polyunsaturated fatty acids (PUFAs) with a preference for n-6 PUFAs. In Trypanosoma cruzi (strain CL Brener), this protein is Fatty acid elongase 5.